Reading from the N-terminus, the 304-residue chain is Non-specific ribonucleoside hydrolase RihC (304 aa).

The active site involves histidine 233.

It belongs to the IUNH family. RihC subfamily.

Functionally, hydrolyzes both purine and pyrimidine ribonucleosides with a broad-substrate specificity. The polypeptide is Non-specific ribonucleoside hydrolase RihC (Escherichia coli (strain SMS-3-5 / SECEC)).